Consider the following 124-residue polypeptide: MTTISLRKSNTRLPPEVNRVLYVRNLPFNITSEEMYDIFGKYGAIRQIRIGCDKATKGTAFVVYEDIYDAKNAVDHLSGFNVANRYLIVLYYQHAKMSKKFDQKKSEDEITKLQEKYGVSTKDK.

The interval 16–29 (EVNRVLYVRNLPFN) is interaction with pre-mRNA branch site. The RRM domain occupies 19-94 (RVLYVRNLPF…RYLIVLYYQH (76 aa)).

The protein resides in the nucleus. In terms of biological role, may be necessary for the splicing of pre-mRNA. This chain is Splicing factor 3B subunit 6-like protein, found in Arabidopsis thaliana (Mouse-ear cress).